Consider the following 185-residue polypeptide: UPF0149 protein PD_0802 (185 aa).

Belongs to the UPF0149 family.

This Xylella fastidiosa (strain Temecula1 / ATCC 700964) protein is UPF0149 protein PD_0802.